A 299-amino-acid polypeptide reads, in one-letter code: Deoxyribonuclease-1-like 2 (299 aa).

A signal peptide spans 1-20 (MGGPRALLAALWALEAAGTA). Catalysis depends on residues E99 and H170. C209 and C245 are joined by a disulfide.

It belongs to the DNase I family. The cofactor is Mg(2+). Requires Ca(2+) as cofactor. As to expression, preferentially expressed in the skin and up-regulated during keratinocytes differentiation. Highly abundant (at protein level) in the stratum granulosum.

The protein resides in the cytoplasm. It is found in the secreted. Functionally, divalent cation-dependent acid DNA endonuclease involved in the breakdown of the nucleus during corneocyte formation of epidermal keratinocytes. May play an immune role by eliminating harmful DNA released into the extracellular environment by damaged epidermal cells. The polypeptide is Deoxyribonuclease-1-like 2 (DNASE1L2) (Homo sapiens (Human)).